A 218-amino-acid chain; its full sequence is Protein-L-isoaspartate O-methyltransferase 1 (218 aa).

The active site involves Ser69.

The protein belongs to the methyltransferase superfamily. L-isoaspartyl/D-aspartyl protein methyltransferase family.

The protein localises to the cytoplasm. The catalysed reaction is [protein]-L-isoaspartate + S-adenosyl-L-methionine = [protein]-L-isoaspartate alpha-methyl ester + S-adenosyl-L-homocysteine. Functionally, catalyzes the methyl esterification of L-isoaspartyl residues in peptides and proteins that result from spontaneous decomposition of normal L-aspartyl and L-asparaginyl residues. It plays a role in the repair and/or degradation of damaged proteins. The polypeptide is Protein-L-isoaspartate O-methyltransferase 1 (Marinobacter nauticus (strain ATCC 700491 / DSM 11845 / VT8) (Marinobacter aquaeolei)).